Reading from the N-terminus, the 316-residue chain is 2,3-dihydroxyphenylpropionate/2,3-dihydroxicinnamic acid 1,2-dioxygenase (316 aa).

Histidine 115 (proton donor) is an active-site residue. Histidine 180 serves as the catalytic Proton acceptor.

This sequence belongs to the LigB/MhpB extradiol dioxygenase family. Homotetramer. The cofactor is Fe(2+).

It carries out the reaction 3-(2,3-dihydroxyphenyl)propanoate + O2 = (2Z,4E)-2-hydroxy-6-oxonona-2,4-dienedioate + H(+). The catalysed reaction is (2E)-3-(2,3-dihydroxyphenyl)prop-2-enoate + O2 = (2Z,4E,7E)-2-hydroxy-6-oxonona-2,4,7-trienedioate + H(+). The protein operates within aromatic compound metabolism; 3-phenylpropanoate degradation. Catalyzes the non-heme iron(II)-dependent oxidative cleavage of 2,3-dihydroxyphenylpropionic acid and 2,3-dihydroxicinnamic acid into 2-hydroxy-6-ketononadienedioate and 2-hydroxy-6-ketononatrienedioate, respectively. The sequence is that of 2,3-dihydroxyphenylpropionate/2,3-dihydroxicinnamic acid 1,2-dioxygenase from Rhodococcus rhodochrous.